A 184-amino-acid chain; its full sequence is FMRFamide-like neuropeptides 3 (184 aa).

The first 23 residues, 1-23 (MISPNHLILLFCVNCAFLVASDA), serve as a signal peptide directing secretion. A propeptide spanning residues 24–25 (TP) is cleaved from the precursor. Position 35 is a phenylalanine amide (F35). The propeptide occupies 39–73 (AIADEMTFEEDGYYPSNVMWKRSTVDSSEPVIRDQ). Residues F82, F95, F111, and F126 each carry the phenylalanine amide modification. Positions 90-110 (FGTMRFGKRNPENDTPFGTMR) are disordered. Residues 130 to 142 (EDGNAPFGTMKFG) constitute a propeptide that is removed on maturation. The segment at 150 to 184 (LGTMRFGKRSADDSAPFGTMRFGKRNPLGTMRFGK) is disordered. Phenylalanine amide occurs at positions 155, 171, and 182.

The protein belongs to the FARP (FMRFamide related peptide) family. Each flp gene is expressed in a distinct set of neurons. Flp-3 is expressed in the IL1 and PQR neurons.

The protein localises to the secreted. In terms of biological role, FMRFamides and FMRFamide-like peptides are neuropeptides. SAEPFGTMRF-amide inhibits the activity of dissected pharyngeal myogenic muscle system. This chain is FMRFamide-like neuropeptides 3, found in Caenorhabditis elegans.